Consider the following 245-residue polypeptide: MKIVISPAKKMQTDGGFLPKSQPVFLDQAEELWSYLHSLDQAGLEKVWRANAKITEEARQMLAADLTQPQVPALFAYSGLQYQYLAADVLDQAGLDYLDQHLRVLSGLYGSLRPFDGIVPYRLEMKSPLPAFKYKSLYEFWGEKVYQELYQDDSVVLNLASKEYSHLLTPFLKEGDRLLEVVFQEEKNGKWRTQATHAKMARGRLVRWLAEGGRDLSDLPGFTDFGYAFAPDQSGEDRVVFRKKA.

It belongs to the UPF0246 family.

This Lactobacillus delbrueckii subsp. bulgaricus (strain ATCC 11842 / DSM 20081 / BCRC 10696 / JCM 1002 / NBRC 13953 / NCIMB 11778 / NCTC 12712 / WDCM 00102 / Lb 14) protein is UPF0246 protein Ldb2075.